The sequence spans 305 residues: MGSSLYDILTIVMIAEFIFGNVTNGFIVLTNCIAWLSKRTLSFIGWIQLFLAISRVVLIWEMLLAWLKYMKYSFSYLAGTELRVMMLTWVVSNHFSLWLATILSIFYLLKIASFSRPVFLYLKWRVKKVLLLILLGNLIFLMFNILQINTHIEDWMDQYKRNITWDSRVNEFVGFSNLVLLEMIMFSVTPFTVALVSFILLIFSLWKHLQKMHLSSRGERDPSTKAHVNALRIMVSFLLLYATYFISFFISLIPMAHKKGLDLMFSLTVGLFYPSSHSFILILGHSNLRHSSCLVITYLRCKEKD.

The Extracellular segment spans residues 1–7; the sequence is MGSSLYD. Residues 8 to 28 form a helical membrane-spanning segment; that stretch reads ILTIVMIAEFIFGNVTNGFIV. Over 29-42 the chain is Cytoplasmic; that stretch reads LTNCIAWLSKRTLS. The helical transmembrane segment at 43-63 threads the bilayer; that stretch reads FIGWIQLFLAISRVVLIWEML. The Extracellular segment spans residues 64–88; the sequence is LAWLKYMKYSFSYLAGTELRVMMLT. The chain crosses the membrane as a helical span at residues 89–109; that stretch reads WVVSNHFSLWLATILSIFYLL. The Cytoplasmic segment spans residues 110 to 128; sequence KIASFSRPVFLYLKWRVKK. Residues 129-149 traverse the membrane as a helical segment; it reads VLLLILLGNLIFLMFNILQIN. Residues 150 to 182 lie on the Extracellular side of the membrane; it reads THIEDWMDQYKRNITWDSRVNEFVGFSNLVLLE. N162 carries N-linked (GlcNAc...) asparagine glycosylation. The helical transmembrane segment at 183 to 203 threads the bilayer; that stretch reads MIMFSVTPFTVALVSFILLIF. At 204–232 the chain is on the cytoplasmic side; sequence SLWKHLQKMHLSSRGERDPSTKAHVNALR. The helical transmembrane segment at 233–253 threads the bilayer; the sequence is IMVSFLLLYATYFISFFISLI. The Extracellular segment spans residues 254-262; that stretch reads PMAHKKGLD. A helical membrane pass occupies residues 263 to 283; the sequence is LMFSLTVGLFYPSSHSFILIL. Over 284–305 the chain is Cytoplasmic; the sequence is GHSNLRHSSCLVITYLRCKEKD.

The protein belongs to the G-protein coupled receptor T2R family. In terms of tissue distribution, expressed in subsets of taste receptor cells of the tongue and palate epithelium and exclusively in gustducin-positive cells. Expressed in 15% taste bud cells in circumvallate and foliate papillae but only in 2% in fungiform papillae. Expressed in the duodenum, antrum and fundus (part of the stomach).

Its subcellular location is the membrane. Functionally, receptor that may play a role in the perception of bitterness and is gustducin-linked. May play a role in sensing the chemical composition of the gastrointestinal content. The activity of this receptor may stimulate alpha gustducin, mediate PLC-beta-2 activation and lead to the gating of TRPM5. In Rattus norvegicus (Rat), this protein is Taste receptor type 2 member 13 (Tas2r13).